The chain runs to 128 residues: MSTLVSLPTAAPAPDYQSIDRPLNFSVAAAAKVRELIQEEGNADLALRVYIQGGGCSGFQYGFEFDENRAEDDLAVATDGVTLLVDPLSLQYLMGAEVDYTESLTGAQFVIRNPNAKTTCGCGSSFSV.

The iron-sulfur cluster site is built by C56, C120, and C122.

It belongs to the HesB/IscA family. As to quaternary structure, homodimer. Iron-sulfur cluster is required as a cofactor.

In terms of biological role, required for insertion of 4Fe-4S clusters for at least IspG. The sequence is that of Iron-sulfur cluster insertion protein ErpA from Xanthomonas axonopodis pv. citri (strain 306).